The primary structure comprises 240 residues: Phosphoribosylaminoimidazole-succinocarboxamide synthase (240 aa).

This sequence belongs to the SAICAR synthetase family.

The catalysed reaction is 5-amino-1-(5-phospho-D-ribosyl)imidazole-4-carboxylate + L-aspartate + ATP = (2S)-2-[5-amino-1-(5-phospho-beta-D-ribosyl)imidazole-4-carboxamido]succinate + ADP + phosphate + 2 H(+). Its pathway is purine metabolism; IMP biosynthesis via de novo pathway; 5-amino-1-(5-phospho-D-ribosyl)imidazole-4-carboxamide from 5-amino-1-(5-phospho-D-ribosyl)imidazole-4-carboxylate: step 1/2. The protein is Phosphoribosylaminoimidazole-succinocarboxamide synthase of Wolbachia pipientis subsp. Culex pipiens (strain wPip).